Here is a 220-residue protein sequence, read N- to C-terminus: Ribosome maturation factor RimP (220 aa).

The tract at residues 173-220 (KKDKEERRQRKKARRRGEKGGVGDDGTAGEEQPDSAREGPARSASEGE) is disordered.

Belongs to the RimP family.

It is found in the cytoplasm. Required for maturation of 30S ribosomal subunits. The sequence is that of Ribosome maturation factor RimP from Chelativorans sp. (strain BNC1).